The following is a 151-amino-acid chain: Ribosome maturation factor RimP (151 aa).

It belongs to the RimP family.

The protein resides in the cytoplasm. In terms of biological role, required for maturation of 30S ribosomal subunits. In Vibrio cholerae serotype O1 (strain ATCC 39541 / Classical Ogawa 395 / O395), this protein is Ribosome maturation factor RimP.